A 186-amino-acid polypeptide reads, in one-letter code: ATP synthase subunit b, chloroplastic (186 aa).

A helical transmembrane segment spans residues 26–44 (ILETNLINLGVVIGTLLYF).

The protein belongs to the ATPase B chain family. As to quaternary structure, F-type ATPases have 2 components, F(1) - the catalytic core - and F(0) - the membrane proton channel. F(1) has five subunits: alpha(3), beta(3), gamma(1), delta(1), epsilon(1). F(0) has four main subunits: a(1), b(1), b'(1) and c(10-14). The alpha and beta chains form an alternating ring which encloses part of the gamma chain. F(1) is attached to F(0) by a central stalk formed by the gamma and epsilon chains, while a peripheral stalk is formed by the delta, b and b' chains.

The protein resides in the plastid. It is found in the chloroplast thylakoid membrane. F(1)F(0) ATP synthase produces ATP from ADP in the presence of a proton or sodium gradient. F-type ATPases consist of two structural domains, F(1) containing the extramembraneous catalytic core and F(0) containing the membrane proton channel, linked together by a central stalk and a peripheral stalk. During catalysis, ATP synthesis in the catalytic domain of F(1) is coupled via a rotary mechanism of the central stalk subunits to proton translocation. Its function is as follows. Component of the F(0) channel, it forms part of the peripheral stalk, linking F(1) to F(0). The chain is ATP synthase subunit b, chloroplastic from Chara vulgaris (Common stonewort).